A 384-amino-acid polypeptide reads, in one-letter code: Zinc metalloproteinase nas-12 (384 aa).

An N-terminal signal peptide occupies residues 1–25 (MLYIPQFSIYFCLGYLLLFCKISNA). The Peptidase M12A domain occupies 73 to 271 (VSIKGSSMNR…EKLNRLGQCG (199 aa)). 5 disulfide bridges follow: cysteine 116-cysteine 270, cysteine 137-cysteine 156, cysteine 287-cysteine 325, cysteine 296-cysteine 318, and cysteine 305-cysteine 322. Histidine 164 contributes to the Zn(2+) binding site. The active site involves glutamate 165. Zn(2+) contacts are provided by histidine 168 and histidine 174. Residues 287-325 (CQDVATAVSCEGNRRRGMCKNPFYKQMMIKSCQKTCRLC) form the ShKT 1 domain. N-linked (GlcNAc...) asparagine glycosylation is present at asparagine 340. 3 disulfide bridges follow: cysteine 348–cysteine 384, cysteine 355–cysteine 377, and cysteine 364–cysteine 381. Residues 348 to 384 (CEDKHPRCDIYSHNGFCTLPFYDDVRYQLCAKTCNLC) enclose the ShKT 2 domain.

Zn(2+) serves as cofactor. Expressed in pharyngeal glands.

It localises to the secreted. Functionally, metalloprotease. The chain is Zinc metalloproteinase nas-12 (nas-12) from Caenorhabditis elegans.